Consider the following 886-residue polypeptide: Envelope glycoprotein GP350 (886 aa).

Topologically, residues 1–839 (MEAALLVCQY…TSQPRFSNLS (839 aa)) are virion surface. Residues asparagine 47, asparagine 87, asparagine 114, asparagine 166, asparagine 169, asparagine 195, asparagine 229, asparagine 277, asparagine 318, asparagine 328, asparagine 345, asparagine 356, asparagine 378, asparagine 386, asparagine 411, asparagine 435, asparagine 443, asparagine 457, asparagine 497, asparagine 519, asparagine 533, asparagine 554, asparagine 568, asparagine 589, asparagine 603, asparagine 606, asparagine 624, and asparagine 635 are each glycosylated (N-linked (GlcNAc...) asparagine; by host). The segment at 423–810 (KAPESTTTSP…PSTSSKLRPR (388 aa)) is disordered. A compositionally biased stretch (low complexity) spans 428–437 (TTTSPTLNTT). Over residues 442–488 (PNTTTGLPSSTHVPTNLTAPASTGPTVSTADVTSPTPAGTTSGASPV) the composition is skewed to polar residues. Residues 507-595 (TSPTSAVTTP…PTPNATSPTV (89 aa)) are compositionally biased toward low complexity. The span at 596 to 637 (GETSPQANTTNHTLGGTSSTPVVTSPPKNATSAVTTGQHNIT) shows a compositional bias: polar residues. A compositionally biased stretch (low complexity) spans 638–660 (SSSTSSMSLRPSSISETLSPSTS). Asparagine 662 and asparagine 680 each carry an N-linked (GlcNAc...) asparagine; by host glycan. Residues 684-699 (VTPASTSTHHVSTSSP) show a composition bias toward low complexity. Polar residues predominate over residues 704 to 720 (GTTSQASGPGNSSTSTK). 4 N-linked (GlcNAc...) asparagine; by host glycosylation sites follow: asparagine 714, asparagine 725, asparagine 734, and asparagine 759. Positions 733-760 (KNATSPQAPSGQKTAVPTVTSTGGKANS) are enriched in polar residues. A compositionally biased stretch (low complexity) spans 761-771 (TTGGKHTTGHG). Over residues 773-806 (RTSTEPTTDYGGDSTTPRTRYNATTYLPPSTSSK) the composition is skewed to polar residues. Residues asparagine 794 and asparagine 837 are each glycosylated (N-linked (GlcNAc...) asparagine; by host). Residues 840–860 (MLVLQWASLAVLTLLLLLVMA) form a helical membrane-spanning segment. Over 861 to 886 (DCAFRRNLSTSHTYTTPPYDDAETYV) the chain is Intravirion.

It belongs to the Epstein-Barr GP350 family. As to quaternary structure, interacts with host CR2. Post-translationally, extensively glycosylated.

It is found in the virion membrane. The protein resides in the host membrane. Initiates virion attachment to host B-lymphocyte cell, leading to virus entry. Acts by binding to host CR2 at the surface of B-lymphocytes, facilitating the binding of viral glycoprotein gp42 to HLA class II molecules. Attachment triggers virion-host membrane fusion and invasion of the host cell. The sequence is that of Envelope glycoprotein GP350 from Homo sapiens (Human).